A 209-amino-acid polypeptide reads, in one-letter code: GTP cyclohydrolase-2 (209 aa).

Position 49–53 (49–53) interacts with GTP; that stretch reads RIHSE. Cysteine 54, cysteine 65, and cysteine 67 together coordinate Zn(2+). Residues glutamine 70, 92 to 94, and threonine 114 contribute to the GTP site; that span reads EGR. The Proton acceptor role is filled by aspartate 126. Arginine 128 functions as the Nucleophile in the catalytic mechanism. Threonine 149 and lysine 154 together coordinate GTP.

It belongs to the GTP cyclohydrolase II family. Requires Zn(2+) as cofactor.

The catalysed reaction is GTP + 4 H2O = 2,5-diamino-6-hydroxy-4-(5-phosphoribosylamino)-pyrimidine + formate + 2 phosphate + 3 H(+). The protein operates within cofactor biosynthesis; riboflavin biosynthesis; 5-amino-6-(D-ribitylamino)uracil from GTP: step 1/4. Its function is as follows. Catalyzes the conversion of GTP to 2,5-diamino-6-ribosylamino-4(3H)-pyrimidinone 5'-phosphate (DARP), formate and pyrophosphate. This chain is GTP cyclohydrolase-2, found in Shewanella halifaxensis (strain HAW-EB4).